Consider the following 232-residue polypeptide: Thiamine import ATP-binding protein ThiQ (232 aa).

Residues 2 to 230 (LKLTDITWLY…KGSASAIWGI (229 aa)) form the ABC transporter domain. 32–39 (GPSGAGKS) contributes to the ATP binding site.

The protein belongs to the ABC transporter superfamily. Thiamine importer (TC 3.A.1.19.1) family. In terms of assembly, the complex is composed of two ATP-binding proteins (ThiQ), two transmembrane proteins (ThiP) and a solute-binding protein (ThiB).

The protein localises to the cell inner membrane. It catalyses the reaction thiamine(out) + ATP + H2O = thiamine(in) + ADP + phosphate + H(+). In terms of biological role, part of the ABC transporter complex ThiBPQ involved in thiamine import. Responsible for energy coupling to the transport system. The chain is Thiamine import ATP-binding protein ThiQ from Shigella flexneri.